The sequence spans 412 residues: Argininosuccinate synthase (412 aa).

Residues 10–18 and Ala36 contribute to the ATP site; that span reads AYSGGLDTS. L-citrulline-binding residues include Tyr87 and Ser92. Tyr87 carries the phosphotyrosine modification. Lys112 is subject to N6-acetyllysine. At Tyr113 the chain carries Phosphotyrosine. Residue 115–123 coordinates ATP; sequence SHGATGKGN. L-aspartate contacts are provided by Thr119, Asn123, and Asp124. Residue Asn123 participates in L-citrulline binding. Residue Arg127 coordinates L-citrulline. An N6-acetyllysine; by CLOCK mark is found at Lys165 and Lys176. Residues Ser180 and Ser189 each contribute to the L-citrulline site. Ser180 bears the Phosphoserine mark. Position 219 is a phosphoserine (Ser219). Residues Glu270 and Tyr282 each contribute to the L-citrulline site.

This sequence belongs to the argininosuccinate synthase family. Type 1 subfamily. Homotetramer. Interacts with NMRAL1. Interacts with CLOCK; in a circadian manner. Forms tissue-specific complexes with ASL, SLC7A1, HSP90AA1 and nitric oxide synthase NOS1, NOS2 or NOS3; the complex regulates cell-autonomous L-arginine synthesis and citrulline recycling while channeling extracellular L-arginine to nitric oxide synthesis pathway. Acetylated by CLOCK in a circadian manner which negatively regulates its enzyme activity. Deacetylated by histone deacetylases.

Its subcellular location is the cytoplasm. It localises to the cytosol. It catalyses the reaction L-citrulline + L-aspartate + ATP = 2-(N(omega)-L-arginino)succinate + AMP + diphosphate + H(+). It functions in the pathway amino-acid biosynthesis; L-arginine biosynthesis; L-arginine from L-ornithine and carbamoyl phosphate: step 2/3. It participates in nitrogen metabolism; urea cycle; (N(omega)-L-arginino)succinate from L-aspartate and L-citrulline: step 1/1. Its function is as follows. One of the enzymes of the urea cycle, the metabolic pathway transforming neurotoxic amonia produced by protein catabolism into inocuous urea in the liver of ureotelic animals. Catalyzes the formation of arginosuccinate from aspartate, citrulline and ATP and together with ASL it is responsible for the biosynthesis of arginine in most body tissues. This Bos taurus (Bovine) protein is Argininosuccinate synthase.